We begin with the raw amino-acid sequence, 443 residues long: UDP-N-acetylmuramate--L-alanine ligase (443 aa).

110-116 (GAHGKTS) serves as a coordination point for ATP.

It belongs to the MurCDEF family.

The protein resides in the cytoplasm. The catalysed reaction is UDP-N-acetyl-alpha-D-muramate + L-alanine + ATP = UDP-N-acetyl-alpha-D-muramoyl-L-alanine + ADP + phosphate + H(+). It participates in cell wall biogenesis; peptidoglycan biosynthesis. Its function is as follows. Cell wall formation. This is UDP-N-acetylmuramate--L-alanine ligase from Streptococcus equi subsp. zooepidemicus (strain H70).